The sequence spans 440 residues: MESQQLSQHSPISHGSACASVTSKEVQTTQDPLDISASKTEECEKVFTQANSQQPTTPPSAAVPENHHHASPQAAQVPLPQNGPYPQQRMMTPQQANISGWPVYGHPSLMPYPPYQMSPMYAPPGAQSQFTQYPQYVGTHLNTPSPESGNSFPDSSSAKSNMTSTNQHVRPPPILTSPNDFLNWVKIYIKFLQNSNLGDIIPTATRKAVRQMTDDELTFLCHTFQLFALSQFLPTWVKDILSVDYTDIMKILSKSINKMQSDTQEVNDITTLANLHYNGSTPADAFEAEVTNILDRLKNNGIPINNKVACQFIMRGLSGEYKFLRYARHRYIHMTVADLFSDIHSMYEEQQESKRNKSTYRRSPSDEKKDSRTYTNTTKPKSITRNSQKPNNSQSRTARAHNVSTSNNFPGPDNDLIRGSTTEPIQLKNKHDLHLRPGTY.

2 stretches are compositionally biased toward polar residues: residues 1–31 (MESQQLSQHSPISHGSACASVTSKEVQTTQD) and 137–168 (VGTHLNTPSPESGNSFPDSSSAKSNMTSTNQH). Disordered regions lie at residues 1-75 (MESQ…PQAA), 137-174 (VGTHLNTPSPESGNSFPDSSSAKSNMTSTNQHVRPPPI), and 350-440 (QQES…PGTY). Positions 299-401 (NNGIPINNKV…NSQSRTARAH (103 aa)) are RNA-binding. Positions 363–372 (SPSDEKKDSR) are enriched in basic and acidic residues. A compositionally biased stretch (polar residues) spans 373 to 409 (TYTNTTKPKSITRNSQKPNNSQSRTARAHNVSTSNNF). Positions 429 to 440 (NKHDLHLRPGTY) are enriched in basic and acidic residues.

As to quaternary structure, homotrimer.

It localises to the cytoplasm. In terms of biological role, capsid protein (CA) is the structural component of the virus-like particle (VLP), forming the shell that encapsulates the retrotransposons dimeric RNA genome. The particles are assembled from trimer-clustered units and there are holes in the capsid shells that allow for the diffusion of macromolecules. CA also has nucleocapsid-like chaperone activity, promoting primer tRNA(i)-Met annealing to the multipartite primer-binding site (PBS), dimerization of Ty1 RNA and initiation of reverse transcription. This Saccharomyces cerevisiae (strain ATCC 204508 / S288c) (Baker's yeast) protein is Transposon Ty1-DR2 Gag polyprotein (TY1A-DR2).